Here is a 225-residue protein sequence, read N- to C-terminus: UPF0725 protein At5g63820 (225 aa).

Belongs to the UPF0725 (EMB2204) family.

This Arabidopsis thaliana (Mouse-ear cress) protein is UPF0725 protein At5g63820.